A 267-amino-acid chain; its full sequence is tRNA-cytidine(32) 2-sulfurtransferase (267 aa).

Residues 37-42 (SGGKDS) carry the PP-loop motif motif. Positions 112, 115, and 203 each coordinate [4Fe-4S] cluster.

The protein belongs to the TtcA family. As to quaternary structure, homodimer. It depends on Mg(2+) as a cofactor. The cofactor is [4Fe-4S] cluster.

The protein localises to the cytoplasm. The catalysed reaction is cytidine(32) in tRNA + S-sulfanyl-L-cysteinyl-[cysteine desulfurase] + AH2 + ATP = 2-thiocytidine(32) in tRNA + L-cysteinyl-[cysteine desulfurase] + A + AMP + diphosphate + H(+). The protein operates within tRNA modification. Its function is as follows. Catalyzes the ATP-dependent 2-thiolation of cytidine in position 32 of tRNA, to form 2-thiocytidine (s(2)C32). The sulfur atoms are provided by the cysteine/cysteine desulfurase (IscS) system. This Dichelobacter nodosus (strain VCS1703A) protein is tRNA-cytidine(32) 2-sulfurtransferase.